The sequence spans 373 residues: MAVDSLETEIDTAVRVVHLASSLCVKVQEKLHLPNGGHVKSKDDDSPVTVADFGVQAIVSWVLAEVFGDQNLSIVAEEDTETLSEADSLGLLGAVSNAVNEALSEAQNYGLPKPVKPLGSSEILKAISRCNSVGGPKGRHWVLDPVDGTLGFVRGDQYAVALALIENGKVLLGVLGCPNYPVKKECLSNGCNQAMKTKAVAGSVSKGCVMYAKRGSGQAWMQPLIVGGIPESATLLKVSSVDDPVLATVCEPVERANSNHLFTAGLANSMGVRKQPMRVYSMVKYAAIARGDAEVFMKFAQSSYKEKIWDHAAGVVIVEEAGGVVTDAGGRNLDFSKGVYLEGLDRGIIACSGQVLHEKIIGAVYASWESSSL.

Catalysis depends on Asp-52, which acts as the Proton acceptor. Positions 77, 144, 146, and 147 each coordinate Mg(2+). Thr-149 functions as the Proton acceptor in the catalytic mechanism. The adenosine 3',5'-bisphosphate site is built by Thr-149, Ser-281, Lys-284, Lys-298, and Asp-310. Residues Ser-281, Lys-284, Lys-298, and Asp-310 each contribute to the AMP site. Asp-310 lines the Mg(2+) pocket.

This sequence belongs to the inositol monophosphatase superfamily. It depends on Mg(2+) as a cofactor. In terms of tissue distribution, expressed in roots, leaves, stems, flowers and siliques.

It catalyses the reaction adenosine 3',5'-bisphosphate + H2O = AMP + phosphate. The enzyme catalyses 3'-phosphoadenylyl sulfate + H2O = adenosine 5'-phosphosulfate + phosphate. Inhibited by Li(+) (IC(50)=10 mM), Na(+) (IC(50)=50 mM) and Ca(2+) (IC(50)=0.06 mM). Functionally, phosphatase that converts adenosine 3'-phosphate 5'-phosphosulfate (PAPS) to adenosine 5'-phosphosulfate (APS) and 3'-phosphoadenosine 5'-phosphate (3'-PAP) to AMP. May regulate the flux of sulfur in the sulfur-activation pathway by converting PAPS to APS. Prevents both the toxicity of PAP on RNA processing enzymes as well as the product inhibition by PAP of sulfate conjugation. The sequence is that of 3',5'-bisphosphate nucleotidase AHL from Arabidopsis thaliana (Mouse-ear cress).